We begin with the raw amino-acid sequence, 924 residues long: DNA repair and recombination protein RDH54 (924 aa).

The span at 1–10 shows a compositional bias: basic and acidic residues; the sequence is MQIPKYENKP. 2 disordered regions span residues 1 to 21 and 155 to 183; these read MQIPKYENKPFKPPRRVGSNK and EALSQNMGNPSPPTTSTTETVPSTKNDGG. The segment covering 168-178 has biased composition (low complexity); it reads TTSTTETVPST. The Helicase ATP-binding domain maps to 299 to 487; it reads LENDSDISGC…FTIIDFINPG (189 aa). ATP is bound at residue 346-353; sequence IPLTGLCK. Positions 472–475 match the DEGH box motif; sequence NDLN. Lysine 615 participates in a covalent cross-link: Glycyl lysine isopeptide (Lys-Gly) (interchain with G-Cter in ubiquitin). Residues 631 to 790 enclose the Helicase C-terminal domain; sequence KLKVLMTLLE…DSEMRNKESS (160 aa).

The protein belongs to the SNF2/RAD54 helicase family. As to quaternary structure, interacts with RAD51 and DMC1.

Its subcellular location is the nucleus. The enzyme catalyses ATP + H2O = ADP + phosphate + H(+). Its function is as follows. Involved in the recombinational repair of double-strand breaks (DSB) in DNA during mitosis and meiosis. Has DNA dependent ATPase activity. Promotes D-loop (displacement loop) formation with RAD51 recombinase. Modifies the topology of double-stranded DNA during the D-loop reaction to facilitate the invasion of the homologous duplex molecule by the initiating single-stranded DNA substrate. Required for adaptation from G2/M checkpoint arrest induced by a double strand break, by participating in monitoring the extent of single-stranded DNA produced by resection of DNA ends. This role is distinct from its roles in recombination. Promotes colocalization of RAD51 and DMC1 during meiotic recombination. Involved in crossover interference. The polypeptide is DNA repair and recombination protein RDH54 (RDH54) (Saccharomyces cerevisiae (strain JAY291) (Baker's yeast)).